A 142-amino-acid chain; its full sequence is Holo-[acyl-carrier-protein] synthase (142 aa).

Mg(2+) is bound by residues aspartate 8 and glutamate 57.

Belongs to the P-Pant transferase superfamily. AcpS family. Mg(2+) serves as cofactor.

It is found in the cytoplasm. It catalyses the reaction apo-[ACP] + CoA = holo-[ACP] + adenosine 3',5'-bisphosphate + H(+). Transfers the 4'-phosphopantetheine moiety from coenzyme A to a Ser of acyl-carrier-protein. In Maricaulis maris (strain MCS10) (Caulobacter maris), this protein is Holo-[acyl-carrier-protein] synthase.